Consider the following 58-residue polypeptide: Large ribosomal subunit protein uL30 (58 aa).

The protein belongs to the universal ribosomal protein uL30 family. Part of the 50S ribosomal subunit.

This Porphyromonas gingivalis (strain ATCC 33277 / DSM 20709 / CIP 103683 / JCM 12257 / NCTC 11834 / 2561) protein is Large ribosomal subunit protein uL30.